A 193-amino-acid polypeptide reads, in one-letter code: Holliday junction branch migration complex subunit RuvA (193 aa).

Residues 1–64 (MIGRIAGTLI…EDAHLLYGFG (64 aa)) are domain I. Residues 65–143 (TAAERETFRQ…ADLGTVPGGP (79 aa)) form a domain II region. Residues 144–151 (AVSDDAVD) form a flexible linker region. Residues 151 to 193 (DVLNALLALGYSDKEAAQAIKQVPAGTGVSEGIKLALKALSKG) are domain III.

This sequence belongs to the RuvA family. In terms of assembly, homotetramer. Forms an RuvA(8)-RuvB(12)-Holliday junction (HJ) complex. HJ DNA is sandwiched between 2 RuvA tetramers; dsDNA enters through RuvA and exits via RuvB. An RuvB hexamer assembles on each DNA strand where it exits the tetramer. Each RuvB hexamer is contacted by two RuvA subunits (via domain III) on 2 adjacent RuvB subunits; this complex drives branch migration. In the full resolvosome a probable DNA-RuvA(4)-RuvB(12)-RuvC(2) complex forms which resolves the HJ.

Its subcellular location is the cytoplasm. The RuvA-RuvB-RuvC complex processes Holliday junction (HJ) DNA during genetic recombination and DNA repair, while the RuvA-RuvB complex plays an important role in the rescue of blocked DNA replication forks via replication fork reversal (RFR). RuvA specifically binds to HJ cruciform DNA, conferring on it an open structure. The RuvB hexamer acts as an ATP-dependent pump, pulling dsDNA into and through the RuvAB complex. HJ branch migration allows RuvC to scan DNA until it finds its consensus sequence, where it cleaves and resolves the cruciform DNA. The sequence is that of Holliday junction branch migration complex subunit RuvA from Ralstonia nicotianae (strain ATCC BAA-1114 / GMI1000) (Ralstonia solanacearum).